The chain runs to 411 residues: Phosphopentomutase (411 aa).

Mn(2+)-binding residues include aspartate 14, aspartate 306, histidine 311, aspartate 347, histidine 348, and histidine 359.

Belongs to the phosphopentomutase family. Requires Mn(2+) as cofactor.

It is found in the cytoplasm. The enzyme catalyses 2-deoxy-alpha-D-ribose 1-phosphate = 2-deoxy-D-ribose 5-phosphate. It catalyses the reaction alpha-D-ribose 1-phosphate = D-ribose 5-phosphate. It functions in the pathway carbohydrate degradation; 2-deoxy-D-ribose 1-phosphate degradation; D-glyceraldehyde 3-phosphate and acetaldehyde from 2-deoxy-alpha-D-ribose 1-phosphate: step 1/2. Functionally, isomerase that catalyzes the conversion of deoxy-ribose 1-phosphate (dRib-1-P) and ribose 1-phosphate (Rib-1-P) to deoxy-ribose 5-phosphate (dRib-5-P) and ribose 5-phosphate (Rib-5-P), respectively. The sequence is that of Phosphopentomutase from Lactococcus lactis subsp. lactis (strain IL1403) (Streptococcus lactis).